A 484-amino-acid chain; its full sequence is Probable cytosol aminopeptidase (484 aa).

Mn(2+) contacts are provided by K256 and D261. K268 is a catalytic residue. Mn(2+)-binding residues include D279, D338, and E340. Residue R342 is part of the active site.

It belongs to the peptidase M17 family. Requires Mn(2+) as cofactor.

Its subcellular location is the cytoplasm. It carries out the reaction Release of an N-terminal amino acid, Xaa-|-Yaa-, in which Xaa is preferably Leu, but may be other amino acids including Pro although not Arg or Lys, and Yaa may be Pro. Amino acid amides and methyl esters are also readily hydrolyzed, but rates on arylamides are exceedingly low.. The enzyme catalyses Release of an N-terminal amino acid, preferentially leucine, but not glutamic or aspartic acids.. Its function is as follows. Presumably involved in the processing and regular turnover of intracellular proteins. Catalyzes the removal of unsubstituted N-terminal amino acids from various peptides. The polypeptide is Probable cytosol aminopeptidase (Methylibium petroleiphilum (strain ATCC BAA-1232 / LMG 22953 / PM1)).